The chain runs to 676 residues: Probable ERAD-associated E3 ubiquitin-protein ligase ASI1 (676 aa).

Residues 1 to 78 are Perinuclear space-facing; the sequence is MSTNILQHVK…TLQLAKVGIR (78 aa). Asn-24, Asn-34, Asn-46, and Asn-66 each carry an N-linked (GlcNAc...) asparagine glycan. The helical transmembrane segment at 79–99 threads the bilayer; it reads MFFSYSVSKYAVLCFSTAIIL. Residues 100 to 126 lie on the Nuclear side of the membrane; it reads NRLTVMSSLRSNSTNIRLPLWSKTLLH. A helical membrane pass occupies residues 127–147; sequence LVATLSLVKALLQILSQFGLM. Residues 148–156 are Perinuclear space-facing; sequence HELHVSDTD. Residues 157–177 traverse the membrane as a helical segment; that stretch reads FYALSVYLFVALSDCIEIFIS. Topologically, residues 178–181 are nuclear; the sequence is STTN. Residues 182-202 traverse the membrane as a helical segment; that stretch reads VPSLICSDFSIWGLSLNLYII. Over 203–277 the chain is Perinuclear space; that stretch reads SKMPAGQQHI…NICLIHNYFP (75 aa). A helical transmembrane segment spans residues 278–298; it reads GFFYISTILLASIGIFLKALF. Residues 299–676 lie on the Nuclear side of the membrane; the sequence is TSNPFRSLYS…VKGYSKLNIV (378 aa). Residues 624–664 form an RING-type; atypical zinc finger; sequence CLICKVNKRNIVTWPCRCLALCDDCRISLGYKGFATCVSCD.

As to quaternary structure, component of the Asi complex, which contains ASI1, ASI2 and ASI3. Interacts directly with ASI1.

It is found in the nucleus inner membrane. The enzyme catalyses S-ubiquitinyl-[E2 ubiquitin-conjugating enzyme]-L-cysteine + [acceptor protein]-L-lysine = [E2 ubiquitin-conjugating enzyme]-L-cysteine + N(6)-ubiquitinyl-[acceptor protein]-L-lysine.. Its function is as follows. Part of the nuclear inner membrane (INM)-specific branch of the ER-associated degradation (ERAD) pathway, required for the elimination of misfolded proteins in the INM, a specialized ER subdomain. Required for ERG11 degradation. Negative regulator of SPS-sensor signaling. Together with ASI2 and ASI3, prevents the unprocessed precursor forms of STP1 and STP2 that escape cytoplasmic anchoring from inducing SPS-sensor-regulated genes in the absence of inducing signals. Controls amino acid permease (AAP) gene expression in response to amino acid availability, a process mediated by the transcription factors STP1 and STP1. The protein is Probable ERAD-associated E3 ubiquitin-protein ligase ASI1 (ASI3) of Saccharomyces cerevisiae (strain ATCC 204508 / S288c) (Baker's yeast).